The sequence spans 339 residues: Anthranilate phosphoribosyltransferase (339 aa).

5-phospho-alpha-D-ribose 1-diphosphate-binding positions include G81, 84-85 (GD), T89, 91-94 (NVST), 109-117 (KHGNRSVSS), and S121. Position 81 (G81) interacts with anthranilate. S93 lines the Mg(2+) pocket. Position 112 (N112) interacts with anthranilate. R167 contacts anthranilate. Residues D226 and E227 each coordinate Mg(2+).

Belongs to the anthranilate phosphoribosyltransferase family. In terms of assembly, homodimer. It depends on Mg(2+) as a cofactor.

The catalysed reaction is N-(5-phospho-beta-D-ribosyl)anthranilate + diphosphate = 5-phospho-alpha-D-ribose 1-diphosphate + anthranilate. It functions in the pathway amino-acid biosynthesis; L-tryptophan biosynthesis; L-tryptophan from chorismate: step 2/5. Catalyzes the transfer of the phosphoribosyl group of 5-phosphorylribose-1-pyrophosphate (PRPP) to anthranilate to yield N-(5'-phosphoribosyl)-anthranilate (PRA). The chain is Anthranilate phosphoribosyltransferase from Persephonella marina (strain DSM 14350 / EX-H1).